We begin with the raw amino-acid sequence, 140 residues long: Endoribonuclease YbeY (140 aa).

The Zn(2+) site is built by His100, His104, and His110.

This sequence belongs to the endoribonuclease YbeY family. Zn(2+) is required as a cofactor.

The protein localises to the cytoplasm. Its function is as follows. Single strand-specific metallo-endoribonuclease involved in late-stage 70S ribosome quality control and in maturation of the 3' terminus of the 16S rRNA. This chain is Endoribonuclease YbeY, found in Helicobacter pylori (strain Shi470).